The following is a 269-amino-acid chain: Ribosomal RNA small subunit methyltransferase A (269 aa).

5 residues coordinate S-adenosyl-L-methionine: Ile17, Gly42, Glu64, Asp89, and Asn109.

This sequence belongs to the class I-like SAM-binding methyltransferase superfamily. rRNA adenine N(6)-methyltransferase family. RsmA subfamily.

The protein localises to the cytoplasm. It catalyses the reaction adenosine(1518)/adenosine(1519) in 16S rRNA + 4 S-adenosyl-L-methionine = N(6)-dimethyladenosine(1518)/N(6)-dimethyladenosine(1519) in 16S rRNA + 4 S-adenosyl-L-homocysteine + 4 H(+). Specifically dimethylates two adjacent adenosines (A1518 and A1519) in the loop of a conserved hairpin near the 3'-end of 16S rRNA in the 30S particle. May play a critical role in biogenesis of 30S subunits. The polypeptide is Ribosomal RNA small subunit methyltransferase A (Anaplasma phagocytophilum (strain HZ)).